The chain runs to 397 residues: Tryptophan synthase beta chain (397 aa).

Residue K91 is modified to N6-(pyridoxal phosphate)lysine.

This sequence belongs to the TrpB family. Tetramer of two alpha and two beta chains. It depends on pyridoxal 5'-phosphate as a cofactor.

The catalysed reaction is (1S,2R)-1-C-(indol-3-yl)glycerol 3-phosphate + L-serine = D-glyceraldehyde 3-phosphate + L-tryptophan + H2O. Its pathway is amino-acid biosynthesis; L-tryptophan biosynthesis; L-tryptophan from chorismate: step 5/5. The beta subunit is responsible for the synthesis of L-tryptophan from indole and L-serine. The protein is Tryptophan synthase beta chain of Bacillus cereus (strain ZK / E33L).